Reading from the N-terminus, the 173-residue chain is Probable xanthine dehydrogenase subunit E (173 aa).

The region spanning 14–90 (EQFRMTVNGQ…GHSITTIEGL (77 aa)) is the 2Fe-2S ferredoxin-type domain. 8 residues coordinate [2Fe-2S] cluster: C52, C57, C60, C72, C110, C113, C145, and C147.

Could be composed of four subunits: PucA, PucC, PucD and PucE. Requires [2Fe-2S] cluster as cofactor.

It catalyses the reaction xanthine + NAD(+) + H2O = urate + NADH + H(+). The catalysed reaction is hypoxanthine + NAD(+) + H2O = xanthine + NADH + H(+). It functions in the pathway purine metabolism; hypoxanthine degradation; urate from hypoxanthine: step 1/2. Its pathway is purine metabolism; hypoxanthine degradation; urate from hypoxanthine: step 2/2. In terms of biological role, oxidizes hypoxanthine and xanthine to uric acid. The sequence is that of Probable xanthine dehydrogenase subunit E (pucE) from Bacillus subtilis (strain 168).